The primary structure comprises 143 residues: Large-conductance mechanosensitive channel (143 aa).

A run of 2 helical transmembrane segments spans residues 19–39 and 81–101; these read VGVIIGAAFGAIVTSMVGDLI and GSFLTITLNFLIVAGVLFGVI.

The protein belongs to the MscL family. Homopentamer.

It localises to the cell inner membrane. Its function is as follows. Channel that opens in response to stretch forces in the membrane lipid bilayer. May participate in the regulation of osmotic pressure changes within the cell. This chain is Large-conductance mechanosensitive channel, found in Rhodopseudomonas palustris (strain BisB5).